The sequence spans 215 residues: MRVILLGAPGAGKGTQARFITEKFGIPQISTGDMLRAAVKAGSPLGQQVKGVMDSGGLVSDDIIIALIKERITEADCAKGFLFDGFPRTIPQAEALKDAGVTIDHVVEIAVDDEEIVSRIAGRRVHPASGRVYHTEHNPPKVAGKDDVTGEELIQREDDKEETVRHRLSVYHSQTKPLVDFYQKLSAAEGTPKYHSIAGVGSVEQITAKVLSALS.

ATP is bound at residue 10–15; it reads GAGKGT. Residues 30–59 are NMP; it reads STGDMLRAAVKAGSPLGQQVKGVMDSGGLV. Residues Thr31, Arg36, 57–59, 85–88, and Gln92 contribute to the AMP site; these read GLV and GFPR. The segment at 122 to 159 is LID; that stretch reads GRRVHPASGRVYHTEHNPPKVAGKDDVTGEELIQREDD. Residues Arg123 and 132-133 each bind ATP; that span reads VY. Arg156 and Arg167 together coordinate AMP. Gly201 is an ATP binding site.

This sequence belongs to the adenylate kinase family. In terms of assembly, monomer.

The protein resides in the cytoplasm. The enzyme catalyses AMP + ATP = 2 ADP. Its pathway is purine metabolism; AMP biosynthesis via salvage pathway; AMP from ADP: step 1/1. Its function is as follows. Catalyzes the reversible transfer of the terminal phosphate group between ATP and AMP. Plays an important role in cellular energy homeostasis and in adenine nucleotide metabolism. This chain is Adenylate kinase, found in Pseudomonas aeruginosa (strain LESB58).